A 1073-amino-acid polypeptide reads, in one-letter code: Collagen alpha-2(I) chain (1073 aa).

A disordered region spans residues alanine 1–valine 939. 3 stretches are compositionally biased toward low complexity: residues glutamate 100–proline 148, glutamate 178–proline 187, and proline 194–proline 215. Positions phenylalanine 217 to glutamine 227 are enriched in pro residues. The span at proline 229–alanine 239 shows a compositional bias: low complexity. Over residues glycine 246 to glycine 255 the composition is skewed to gly residues. Composition is skewed to low complexity over residues methionine 296–alanine 315, serine 321–alanine 348, alanine 386–threonine 399, and glutamine 411–proline 423. Over residues glycine 424–glycine 433 the composition is skewed to gly residues. Low complexity predominate over residues asparagine 458 to glutamine 468. A compositionally biased stretch (gly residues) spans glycine 481–glycine 508. The span at lysine 519 to proline 530 shows a compositional bias: basic and acidic residues. Composition is skewed to low complexity over residues serine 561–alanine 575 and proline 584–aspartate 597. Residues glycine 607–glycine 616 are compositionally biased toward gly residues. Low complexity-rich tracts occupy residues proline 617–arginine 642, phenylalanine 653–lysine 680, and serine 708–leucine 729. A compositionally biased stretch (gly residues) spans glycine 745–glycine 757. Over residues arginine 758–proline 774 the composition is skewed to low complexity. Residues glycine 811–glycine 820 are compositionally biased toward gly residues. The segment covering alanine 821–proline 836 has biased composition (low complexity). Basic and acidic residues predominate over residues arginine 837–leucine 851. 2 stretches are compositionally biased toward low complexity: residues leucine 857–asparagine 876 and proline 906–proline 917. Over residues alanine 918–proline 932 the composition is skewed to pro residues. The Fibrillar collagen NC1 domain maps to arginine 1039–lysine 1073.

Belongs to the fibrillar collagen family.

The protein localises to the secreted. Its subcellular location is the extracellular space. It is found in the extracellular matrix. The protein is Collagen alpha-2(I) chain of Epinephelus aeneus (White grouper).